A 325-amino-acid polypeptide reads, in one-letter code: DNA repair and recombination protein RadA (325 aa).

107 to 114 (GEFGSGKT) contacts ATP.

Belongs to the eukaryotic RecA-like protein family.

In terms of biological role, involved in DNA repair and in homologous recombination. Binds and assemble on single-stranded DNA to form a nucleoprotein filament. Hydrolyzes ATP in a ssDNA-dependent manner and promotes DNA strand exchange between homologous DNA molecules. This Methanosarcina barkeri (strain Fusaro / DSM 804) protein is DNA repair and recombination protein RadA.